A 272-amino-acid chain; its full sequence is NADH-dependent L-xylulose reductase (272 aa).

2 residues coordinate NADP(+): Leu-24 and Asp-78. The active-site Proton donor is Ser-160. Residues Tyr-175, Lys-179, and Ile-208 each coordinate NADP(+). The active-site Proton acceptor is the Tyr-175. Lys-179 functions as the Lowers pKa of active site Tyr in the catalytic mechanism.

This sequence belongs to the short-chain dehydrogenases/reductases (SDR) family.

It catalyses the reaction xylitol + NAD(+) = L-xylulose + NADH + H(+). The enzyme catalyses D-arabinitol + NAD(+) = D-ribulose + NADH + H(+). Functionally, NADH-dependent L-xylulose reductase; part of the yeast pathway for L-arabinose catabolism. Reversibly converts L-xylulose to xylitol and D-ribulose to D-arabinitol. It has a much lower activity with D-xylulose. Sugar alcohols can serve as a substrate when the hydroxyl group of C-2 is in the L- and the hydroxyl group of the C-3 is in the D-configuration. Also seems to be specific for sugar alcohols that have not more than 5 carbons since no activity is observed with dulcitol (galactitol), which has the hydroxyl group of C-2 in L- and of C-3 in D-configuration, but is a six-carbon sugar alcohol. The polypeptide is NADH-dependent L-xylulose reductase (Ambrosiozyma monospora (Yeast)).